The primary structure comprises 250 residues: 2-(R)-hydroxypropyl-CoM dehydrogenase (250 aa).

Residues 12–14 (SGN), Asp33, 60–61 (DV), and Asn87 each bind NAD(+). Arg152 contacts 2-oxopropyl-coenzyme M. Tyr155 serves as the catalytic Proton acceptor. 188–192 (IETPM) provides a ligand contact to NAD(+). 195–196 (WR) contacts 2-oxopropyl-coenzyme M.

It belongs to the short-chain dehydrogenases/reductases (SDR) family. As to quaternary structure, homodimer in solution. Homotetramer. Component III of the aliphatic epoxide carboxylation complex together with components I, II and IV.

The enzyme catalyses (R)-2-hydroxypropyl-coenzyme M + NAD(+) = 2-oxopropyl-coenzyme M + NADH + H(+). It functions in the pathway alkene metabolism; propylene degradation. With respect to regulation, inhibited by the arginine-specific modifiers 2,3-butanedione and phenylglyoxal. 2-(2-methyl-2-hydroxypropylthio)ethanesulfonate (M-HPC), an achiral analog of both R-HPC and S-HPC, and (2S)-2-hydroxypropyl-coenzyme M (S-HPC) are competitive inhibitors. Inhibited (at 70%) by the coenzyme M analog 2-bromoethanesulfonate (BES). In terms of biological role, involved in aliphatic epoxide carboxylation. Catalyzes the reversible oxidation of (R)-2-hydroxypropyl-coenzyme M (R-HPC) to 2-oxopropyl-coenzyme M (2-KPC). The enzyme is highly specific for the R enantiomers. In vitro can also use achiral 2-propanol and short-chain (R)- and (S)-2-alkanols. In Xanthobacter autotrophicus (strain ATCC BAA-1158 / Py2), this protein is 2-(R)-hydroxypropyl-CoM dehydrogenase.